The chain runs to 481 residues: NADH-quinone oxidoreductase subunit N (481 aa).

Transmembrane regions (helical) follow at residues 9-29 (MLPELYLLGSAMIALLLGIVV), 39-59 (AVSMGVVVVLSWWSGVTDHVA), 76-96 (CISRMLVGVAGFVASLLFLCA), 104-124 (FSVVMLFATLGAMTLVQAGHF), 158-178 (FFILSALSSCIMLYGISLVYG), 205-225 (AFVLVGVLFKLAVVPFHMWAV), 232-252 (PMAAMAFFLIVTKSAAILLLA), 265-285 (ILYGIISVSGLSALVGELGAL), 293-313 (LLAYSNIGQLGYVLPVVVLHG), 318-338 (AIFHYVLTSWVINAWIFSVLL), 359-379 (FVAFALVVSMVSAAGFPPFLG), 399-419 (VAFPYVLLVCAVGIVPCFYCF), and 443-463 (LGLTVIAVVCMLLSVIALFLA).

The protein belongs to the complex I subunit 2 family. As to quaternary structure, NDH-1 is composed of 14 different subunits. Subunits NuoA, H, J, K, L, M, N constitute the membrane sector of the complex.

It localises to the cell inner membrane. The catalysed reaction is a quinone + NADH + 5 H(+)(in) = a quinol + NAD(+) + 4 H(+)(out). Functionally, NDH-1 shuttles electrons from NADH, via FMN and iron-sulfur (Fe-S) centers, to quinones in the respiratory chain. The immediate electron acceptor for the enzyme in this species is believed to be ubiquinone. Couples the redox reaction to proton translocation (for every two electrons transferred, four hydrogen ions are translocated across the cytoplasmic membrane), and thus conserves the redox energy in a proton gradient. The sequence is that of NADH-quinone oxidoreductase subunit N from Anaplasma marginale (strain Florida).